Consider the following 681-residue polypeptide: Amine oxidase [copper-containing] alpha 3, peroxisomal (681 aa).

Residue 323–334 (YLDCGDFGCGQC) participates in substrate binding. Asp-325 functions as the Proton acceptor in the catalytic mechanism. A disulfide bond links Cys-344 and Cys-370. 410–415 (VGNYDY) contacts substrate. Tyr-413 acts as the Schiff-base intermediate with substrate; via topaquinone in catalysis. Residue Tyr-413 is modified to 2',4',5'-topaquinone. Positions 470 and 472 each coordinate Cu cation. Mn(2+) contacts are provided by Asp-481, Asp-621, and Ile-622. His-632 contacts Cu cation.

The protein belongs to the copper/topaquinone oxidase family. In terms of processing, topaquinone (TPQ) is generated by copper-dependent autoxidation of a specific tyrosyl residue. In terms of tissue distribution, mostly expressed in stems, and, at lower levels, in flowers and leaves. Mainly detectable in stipules, hypocotyls and roots.

The protein localises to the peroxisome. The catalysed reaction is a primary methyl amine + O2 + H2O = an aldehyde + H2O2 + NH4(+). The protein operates within amine and polyamine degradation; putrescine degradation. Functionally, copper amine oxidase that can use putrescine and spermidine as substrates. Involved in putrescine catabolism in peroxisomes. The protein is Amine oxidase [copper-containing] alpha 3, peroxisomal of Arabidopsis thaliana (Mouse-ear cress).